A 444-amino-acid chain; its full sequence is Light-independent protochlorophyllide reductase subunit N (444 aa).

[4Fe-4S] cluster contacts are provided by Cys-36, Cys-61, and Cys-118.

The protein belongs to the BchN/ChlN family. In terms of assembly, protochlorophyllide reductase is composed of three subunits; BchL, BchN and BchB. Forms a heterotetramer of two BchB and two BchN subunits. [4Fe-4S] cluster serves as cofactor.

It carries out the reaction chlorophyllide a + oxidized 2[4Fe-4S]-[ferredoxin] + 2 ADP + 2 phosphate = protochlorophyllide a + reduced 2[4Fe-4S]-[ferredoxin] + 2 ATP + 2 H2O. The protein operates within porphyrin-containing compound metabolism; bacteriochlorophyll biosynthesis (light-independent). Component of the dark-operative protochlorophyllide reductase (DPOR) that uses Mg-ATP and reduced ferredoxin to reduce ring D of protochlorophyllide (Pchlide) to form chlorophyllide a (Chlide). This reaction is light-independent. The NB-protein (BchN-BchB) is the catalytic component of the complex. The polypeptide is Light-independent protochlorophyllide reductase subunit N (Chloroflexus aurantiacus (strain ATCC 29366 / DSM 635 / J-10-fl)).